The primary structure comprises 138 residues: Large ribosomal subunit protein uL16c (138 aa).

Belongs to the universal ribosomal protein uL16 family. In terms of assembly, part of the 50S ribosomal subunit.

Its subcellular location is the plastid. The protein resides in the chloroplast. The polypeptide is Large ribosomal subunit protein uL16c (Chaetosphaeridium globosum (Charophycean green alga)).